The sequence spans 200 residues: Large ribosomal subunit protein uL4c (200 aa).

The interval 45–71 is disordered; that stretch reads RAEIRGGGRKPWKQKGTGRARAGSRRS. Basic residues predominate over residues 51-68; it reads GGRKPWKQKGTGRARAGS.

The protein belongs to the universal ribosomal protein uL4 family. As to quaternary structure, part of the 50S ribosomal subunit.

The protein resides in the plastid. Its subcellular location is the chloroplast. Probably binds the 23S rRNA. This is Large ribosomal subunit protein uL4c (rpl4) from Cyanidioschyzon merolae (strain NIES-3377 / 10D) (Unicellular red alga).